The following is a 4662-amino-acid chain: Protein PF3D7_1417600 (4662 aa).

The next 2 helical transmembrane spans lie at 136–156 and 161–181; these read INYV…YLYI and YIYY…FHII. One copy of the LRR 1 repeat lies at 466–489; the sequence is IKNIDSINKNHKRLIKISNYNITN. Residues 583 to 710 form a disordered region; sequence YRNDGDVNNK…KMKPDNTLNE (128 aa). Residues 590-644 show a composition bias toward low complexity; that stretch reads NNKNGYNNNEHSNSSNERSNNNGDNNNNNHNNNNHNNNHHNNGSNNHNGNNNSNN. Positions 650–666 are enriched in basic and acidic residues; sequence DDDKKGNDKKNEDKDDE. Positions 690–701 are enriched in basic residues; it reads KKRKEKSKNKNK. An HSA domain is found at 783-856; it reads YKPTEPVNIF…ISNDIKMFWF (74 aa). The interval 942-967 is disordered; that stretch reads GLMNKMSHQNGKNNNHNDYNNKCEDN. One copy of the LRR 2 repeat lies at 1150–1172; that stretch reads NVHINHIQYDDNNLYYNDDLYNY. Residues 1505–1524 are compositionally biased toward low complexity; sequence NNNNNSNNNNSNSNNNSNSN. 2 disordered regions span residues 1505–1540 and 1705–1761; these read NNNN…NNSS and KINS…NEKD. Over residues 1710-1761 the composition is skewed to basic and acidic residues; it reads NNDKSDDKNDDKNDKKNDGKNDKNDEKDDNKTGEKGDNKIGEKDDNKINEKD. LRR repeat units lie at residues 2063 to 2086 and 2129 to 2153; these read ITKV…MFNK and DEEI…NVKD. The tract at residues 2228–2261 is disordered; it reads KNKSNKKKRAKKNIKLGEEENESECNNEGECNNE. The segment covering 2230 to 2241 has biased composition (basic residues); that stretch reads KSNKKKRAKKNI. The span at 2246–2261 shows a compositional bias: acidic residues; that stretch reads EENESECNNEGECNNE. LRR repeat units follow at residues 2672–2695, 2773–2796, 2864–2888, and 2904–2929; these read LDKL…KTID, NTVL…TVDI, INDD…VNNN, and ANNI…YNNS. Residues 2956 to 2975 form a disordered region; it reads MNNTKQRSHSSYHTSFPMQN. LRR repeat units lie at residues 3377–3400, 3438–3461, 3756–3781, 3935–3960, 3965–3985, and 3986–4010; these read QNNM…NITM, NNSM…YNNS, SQRL…NINN, QPNI…NINN, QPNI…SMNQ, and PNIN…NINN. Residues 4203–4272 are a coiled coil; the sequence is DMNQQERLQQ…ERLQQKWEQQ (70 aa). LRR repeat units lie at residues 4296–4321 and 4333–4357; these read YQEL…IFLK and QKMH…SLQQ. The segment at 4384 to 4412 is disordered; sequence QMNHQQINKHQMNQQQMNKQQMNQQQINQ.

Its subcellular location is the membrane. This Plasmodium falciparum (isolate 3D7) protein is Protein PF3D7_1417600.